The chain runs to 431 residues: Sorting nexin-31 (431 aa).

The 107-residue stretch at 1–107 folds into the PX domain; sequence MHICIPVTEE…DYFRKLQMDT (107 aa).

This sequence belongs to the sorting nexin family.

Its function is as follows. May be involved in protein trafficking. This is Sorting nexin-31 (snx31) from Xenopus laevis (African clawed frog).